We begin with the raw amino-acid sequence, 426 residues long: 3-phosphoshikimate 1-carboxyvinyltransferase (426 aa).

Positions 22, 23, and 27 each coordinate 3-phosphoshikimate. K22 lines the phosphoenolpyruvate pocket. Phosphoenolpyruvate is bound by residues G96 and R124. 3-phosphoshikimate is bound by residues S170, S171, Q172, S198, D314, N337, and K341. Phosphoenolpyruvate is bound at residue Q172. Residue D314 is the Proton acceptor of the active site. Positions 345, 387, and 412 each coordinate phosphoenolpyruvate.

The protein belongs to the EPSP synthase family. In terms of assembly, monomer.

The protein resides in the cytoplasm. It catalyses the reaction 3-phosphoshikimate + phosphoenolpyruvate = 5-O-(1-carboxyvinyl)-3-phosphoshikimate + phosphate. The protein operates within metabolic intermediate biosynthesis; chorismate biosynthesis; chorismate from D-erythrose 4-phosphate and phosphoenolpyruvate: step 6/7. Functionally, catalyzes the transfer of the enolpyruvyl moiety of phosphoenolpyruvate (PEP) to the 5-hydroxyl of shikimate-3-phosphate (S3P) to produce enolpyruvyl shikimate-3-phosphate and inorganic phosphate. The sequence is that of 3-phosphoshikimate 1-carboxyvinyltransferase from Vibrio atlanticus (strain LGP32) (Vibrio splendidus (strain Mel32)).